We begin with the raw amino-acid sequence, 403 residues long: Chorismate synthase (403 aa).

NADP(+) is bound by residues Arg40 and Arg46. Residues 140–142 and 261–262 contribute to the FMN site; these read RSS and QA. Over residues 277–298 the composition is skewed to basic and acidic residues; the sequence is RRGSEAHDEMVRTDEGVDRETN. The segment at 277 to 307 is disordered; it reads RRGSEAHDEMVRTDEGVDRETNRAGGLEGGM. FMN is bound by residues Gly305, 320-324, and Arg346; that span reads KPIST.

This sequence belongs to the chorismate synthase family. As to quaternary structure, homotetramer. Requires FMNH2 as cofactor.

It carries out the reaction 5-O-(1-carboxyvinyl)-3-phosphoshikimate = chorismate + phosphate. Its pathway is metabolic intermediate biosynthesis; chorismate biosynthesis; chorismate from D-erythrose 4-phosphate and phosphoenolpyruvate: step 7/7. Its function is as follows. Catalyzes the anti-1,4-elimination of the C-3 phosphate and the C-6 proR hydrogen from 5-enolpyruvylshikimate-3-phosphate (EPSP) to yield chorismate, which is the branch point compound that serves as the starting substrate for the three terminal pathways of aromatic amino acid biosynthesis. This reaction introduces a second double bond into the aromatic ring system. The chain is Chorismate synthase from Corynebacterium aurimucosum (strain ATCC 700975 / DSM 44827 / CIP 107346 / CN-1) (Corynebacterium nigricans).